A 121-amino-acid polypeptide reads, in one-letter code: MSITKDQILEAVAAMSVMDVVELISAMEEKFGVSAAAAVAVAAGPAEVAEEKTEFDVVLKAIGANKVAVIKAVRSATGLGLKEAKDLVESAPAVMKEGVSKDDAESLKKSLEEAGAEVEVK.

Belongs to the bacterial ribosomal protein bL12 family. As to quaternary structure, homodimer. Part of the ribosomal stalk of the 50S ribosomal subunit. Forms a multimeric L10(L12)X complex, where L10 forms an elongated spine to which 2 to 4 L12 dimers bind in a sequential fashion. Binds GTP-bound translation factors.

Functionally, forms part of the ribosomal stalk which helps the ribosome interact with GTP-bound translation factors. Is thus essential for accurate translation. The protein is Large ribosomal subunit protein bL12 of Pectobacterium atrosepticum (strain SCRI 1043 / ATCC BAA-672) (Erwinia carotovora subsp. atroseptica).